A 216-amino-acid polypeptide reads, in one-letter code: Cytochrome c biogenesis ATP-binding export protein CcmA (216 aa).

The region spanning 11 to 216 (VSASKLTCIR…RKIRLDYRFV (206 aa)) is the ABC transporter domain. 43-50 (GPNGAGKT) contacts ATP.

The protein belongs to the ABC transporter superfamily. CcmA exporter (TC 3.A.1.107) family. The complex is composed of two ATP-binding proteins (CcmA) and two transmembrane proteins (CcmB).

It localises to the cell inner membrane. The enzyme catalyses heme b(in) + ATP + H2O = heme b(out) + ADP + phosphate + H(+). Functionally, part of the ABC transporter complex CcmAB involved in the biogenesis of c-type cytochromes; once thought to export heme, this seems not to be the case, but its exact role is uncertain. Responsible for energy coupling to the transport system. This Shewanella sp. (strain MR-4) protein is Cytochrome c biogenesis ATP-binding export protein CcmA.